A 169-amino-acid polypeptide reads, in one-letter code: Ribosome maturation factor RimM (169 aa).

The PRC barrel domain occupies 92–167 (PKDTYFICDI…YMKIKVVEGL (76 aa)).

It belongs to the RimM family. In terms of assembly, binds ribosomal protein uS19.

The protein localises to the cytoplasm. An accessory protein needed during the final step in the assembly of 30S ribosomal subunit, possibly for assembly of the head region. Essential for efficient processing of 16S rRNA. May be needed both before and after RbfA during the maturation of 16S rRNA. It has affinity for free ribosomal 30S subunits but not for 70S ribosomes. The chain is Ribosome maturation factor RimM from Caldicellulosiruptor bescii (strain ATCC BAA-1888 / DSM 6725 / KCTC 15123 / Z-1320) (Anaerocellum thermophilum).